Consider the following 261-residue polypeptide: Cytochrome c oxidase subunit 3 (261 aa).

The Mitochondrial matrix segment spans residues M1–P15. The chain crosses the membrane as a helical span at residues W16–W34. The Mitochondrial intermembrane portion of the chain corresponds to F35–T40. A helical transmembrane segment spans residues I41–T66. The Mitochondrial matrix portion of the chain corresponds to F67–T72. A helical membrane pass occupies residues P73 to S105. Residues L106–E128 lie on the Mitochondrial intermembrane side of the membrane. The helical transmembrane segment at V129–M152 threads the bilayer. Residues E153 to N155 lie on the Mitochondrial matrix side of the membrane. The chain crosses the membrane as a helical span at residues R156–E183. Residues A184–D190 are Mitochondrial intermembrane-facing. The helical transmembrane segment at G191 to L223 threads the bilayer. At K224–H232 the chain is on the mitochondrial matrix side. A helical membrane pass occupies residues F233–I256. Residues Y257–S261 are Mitochondrial intermembrane-facing.

The protein belongs to the cytochrome c oxidase subunit 3 family. In terms of assembly, component of the cytochrome c oxidase (complex IV, CIV), a multisubunit enzyme composed of 14 subunits. The complex is composed of a catalytic core of 3 subunits MT-CO1, MT-CO2 and MT-CO3, encoded in the mitochondrial DNA, and 11 supernumerary subunits COX4I, COX5A, COX5B, COX6A, COX6B, COX6C, COX7A, COX7B, COX7C, COX8 and NDUFA4, which are encoded in the nuclear genome. The complex exists as a monomer or a dimer and forms supercomplexes (SCs) in the inner mitochondrial membrane with NADH-ubiquinone oxidoreductase (complex I, CI) and ubiquinol-cytochrome c oxidoreductase (cytochrome b-c1 complex, complex III, CIII), resulting in different assemblies (supercomplex SCI(1)III(2)IV(1) and megacomplex MCI(2)III(2)IV(2)).

It localises to the mitochondrion inner membrane. It catalyses the reaction 4 Fe(II)-[cytochrome c] + O2 + 8 H(+)(in) = 4 Fe(III)-[cytochrome c] + 2 H2O + 4 H(+)(out). In terms of biological role, component of the cytochrome c oxidase, the last enzyme in the mitochondrial electron transport chain which drives oxidative phosphorylation. The respiratory chain contains 3 multisubunit complexes succinate dehydrogenase (complex II, CII), ubiquinol-cytochrome c oxidoreductase (cytochrome b-c1 complex, complex III, CIII) and cytochrome c oxidase (complex IV, CIV), that cooperate to transfer electrons derived from NADH and succinate to molecular oxygen, creating an electrochemical gradient over the inner membrane that drives transmembrane transport and the ATP synthase. Cytochrome c oxidase is the component of the respiratory chain that catalyzes the reduction of oxygen to water. Electrons originating from reduced cytochrome c in the intermembrane space (IMS) are transferred via the dinuclear copper A center (CU(A)) of subunit 2 and heme A of subunit 1 to the active site in subunit 1, a binuclear center (BNC) formed by heme A3 and copper B (CU(B)). The BNC reduces molecular oxygen to 2 water molecules using 4 electrons from cytochrome c in the IMS and 4 protons from the mitochondrial matrix. The polypeptide is Cytochrome c oxidase subunit 3 (MT-CO3) (Raphicerus campestris (Steenbok)).